We begin with the raw amino-acid sequence, 263 residues long: Aquaporin Lacbi1:233199 (263 aa).

The Cytoplasmic portion of the chain corresponds to 1–17 (MFTLAHHRHAIRKPMAE). A helical membrane pass occupies residues 18–38 (FFGVALLVIFGAGAACQVVLS). Residues 39–44 (TNPNSF) lie on the Extracellular side of the membrane. Residues 45-65 (LSINFGWAIGIAMGAWISGSI) traverse the membrane as a helical segment. The Cytoplasmic portion of the chain corresponds to 66–88 (SGGHINPAITIAMATYRGFPWRE). Residues 71–73 (NPA) carry the NPA 1 motif. Residues 89 to 109 (VPSYILAQVLGGVVGAALVYA) traverse the membrane as a helical segment. Residues 110–143 (NYIHAIDVFEGGRHIRTQATASLFATYALPYMTQ) are Extracellular-facing. The chain crosses the membrane as a helical span at residues 144 to 164 (VSCFFSEFLATAVLAMMVLAL). The Cytoplasmic segment spans residues 165–174 (TDNRNGAPTN). A helical transmembrane segment spans residues 175-195 (GLSPFALFVLFIGLGASLGME). At 196–227 (TAYALNPARDFGPRLFLAMAGYGKALFNYRSQ) the chain is on the extracellular side. The short motif at 201-203 (NPA) is the NPA 2 element. Residues 228 to 248 (YWLWAPIIAPVLGAQAGGLLY) form a helical membrane-spanning segment. At 249–263 (DTFLYDGDDSPIKWR) the chain is on the cytoplasmic side.

Belongs to the MIP/aquaporin (TC 1.A.8) family.

It is found in the membrane. It catalyses the reaction H2O(in) = H2O(out). In terms of biological role, probable water channel required to facilitate the transport of water across membranes. This is Aquaporin Lacbi1:233199 from Laccaria bicolor (strain S238N-H82 / ATCC MYA-4686) (Bicoloured deceiver).